The chain runs to 422 residues: Dihydrolipoyllysine-residue succinyltransferase component of 2-oxoglutarate dehydrogenase complex (422 aa).

The Lipoyl-binding domain occupies 1 to 76 (MPEVKVPELA…EVGQAIAIIG (76 aa)). Lys42 bears the N6-lipoyllysine mark. The segment at 77–184 (EGSGNASKEN…APAKEEKKYN (108 aa)) is disordered. Composition is skewed to polar residues over residues 80 to 94 (GNAS…TPQQ) and 116 to 130 (NQAN…NATP). The Peripheral subunit-binding (PSBD) domain maps to 127–163 (NATPSARRYARENGVNLAEVSPKTNDVVRKEDIDKKQ). Residues 152–163 (DVVRKEDIDKKQ) show a composition bias toward basic and acidic residues. Residues 164-176 (QAPASTQTTQQAP) are compositionally biased toward low complexity. Active-site residues include His393 and Asp397.

Belongs to the 2-oxoacid dehydrogenase family. In terms of assembly, forms a 24-polypeptide structural core with octahedral symmetry. Part of the 2-oxoglutarate dehydrogenase (OGDH) complex composed of E1 (2-oxoglutarate dehydrogenase), E2 (dihydrolipoamide succinyltransferase) and E3 (dihydrolipoamide dehydrogenase); the complex contains multiple copies of the three enzymatic components (E1, E2 and E3). The cofactor is (R)-lipoate.

It carries out the reaction N(6)-[(R)-dihydrolipoyl]-L-lysyl-[protein] + succinyl-CoA = N(6)-[(R)-S(8)-succinyldihydrolipoyl]-L-lysyl-[protein] + CoA. Its pathway is amino-acid degradation; L-lysine degradation via saccharopine pathway; glutaryl-CoA from L-lysine: step 6/6. Its function is as follows. E2 component of the 2-oxoglutarate dehydrogenase (OGDH) complex which catalyzes the second step in the conversion of 2-oxoglutarate to succinyl-CoA and CO(2). The polypeptide is Dihydrolipoyllysine-residue succinyltransferase component of 2-oxoglutarate dehydrogenase complex (odhB) (Staphylococcus aureus (strain Mu50 / ATCC 700699)).